A 77-amino-acid chain; its full sequence is DNA-directed RNA polymerase subunit omega (77 aa).

This sequence belongs to the RNA polymerase subunit omega family. The RNAP catalytic core consists of 2 alpha, 1 beta, 1 beta' and 1 omega subunit. When a sigma factor is associated with the core the holoenzyme is formed, which can initiate transcription.

It carries out the reaction RNA(n) + a ribonucleoside 5'-triphosphate = RNA(n+1) + diphosphate. Promotes RNA polymerase assembly. Latches the N- and C-terminal regions of the beta' subunit thereby facilitating its interaction with the beta and alpha subunits. In Dichelobacter nodosus (strain VCS1703A), this protein is DNA-directed RNA polymerase subunit omega.